Here is a 128-residue protein sequence, read N- to C-terminus: Sulfurtransferase TusD (128 aa).

The Cysteine persulfide intermediate role is filled by Cys-78.

This sequence belongs to the DsrE/TusD family. In terms of assembly, heterohexamer, formed by a dimer of trimers. The hexameric TusBCD complex contains 2 copies each of TusB, TusC and TusD. The TusBCD complex interacts with TusE.

It localises to the cytoplasm. Functionally, part of a sulfur-relay system required for 2-thiolation of 5-methylaminomethyl-2-thiouridine (mnm(5)s(2)U) at tRNA wobble positions. Accepts sulfur from TusA and transfers it in turn to TusE. The protein is Sulfurtransferase TusD of Escherichia coli O157:H7.